Here is a 141-residue protein sequence, read N- to C-terminus: Large ribosomal subunit protein mL42 (141 aa).

A mitochondrion-targeting transit peptide spans 1 to 31 (MTAAVKWAVSHRTIWRHLFPIQNGAISSACH).

This sequence belongs to the mitochondrion-specific ribosomal protein mL42 family. In terms of assembly, component of the mitochondrial ribosome large subunit (39S) which comprises a 16S rRNA and about 50 distinct proteins. Component of the mitochondrial ribosome small subunit (28S) which comprises a 12S rRNA and about 30 distinct proteins.

The protein resides in the mitochondrion. This Rattus norvegicus (Rat) protein is Large ribosomal subunit protein mL42 (Mrpl42).